The chain runs to 382 residues: Mitogen-activated protein kinase 9 (382 aa).

Positions 26 to 321 (YQQLKPIGSG…VDEALRHPYI (296 aa)) constitute a Protein kinase domain. Residues 33–38 (GSGAQG) and Lys55 each bind ATP. Residue Asp151 is the Proton acceptor of the active site. A Phosphothreonine modification is found at Thr183. Residues 183–185 (TPY) carry the TXY motif. The residue at position 185 (Tyr185) is a Phosphotyrosine.

It belongs to the protein kinase superfamily. CMGC Ser/Thr protein kinase family. MAP kinase subfamily. The cofactor is Mg(2+). Dually phosphorylated on Thr-183 and Tyr-185, which activates the enzyme. Expressed in the neuroepithelium of developing brain at stages 16 to 26.

The catalysed reaction is L-seryl-[protein] + ATP = O-phospho-L-seryl-[protein] + ADP + H(+). It catalyses the reaction L-threonyl-[protein] + ATP = O-phospho-L-threonyl-[protein] + ADP + H(+). Activated by threonine and tyrosine phosphorylation. Functionally, responds to activation by environmental stress and pro-inflammatory cytokines by phosphorylating a number of transcription factors, primarily components of AP-1 such as JUN and ATF2 and thus regulates AP-1 transcriptional activity. May play a role in the development of the central nervous system during embryogenesis. May play a role in the regulation of the circadian clock. The protein is Mitogen-activated protein kinase 9 (MAPK9) of Gallus gallus (Chicken).